The chain runs to 883 residues: Chromatin structure-remodeling complex protein RSC30 (883 aa).

Positions 14–45 (ACTQCRKRKIGCDRAKPICGNCVKYNKPDCFY) form a DNA-binding region, zn(2)-C6 fungal-type. 2 disordered regions span residues 121 to 157 (QNNNTNNNTAPRQNSSTVSSNVHGNTIVRSDSPDVPS) and 241 to 273 (NTTANKINKTGENSKKGKVDGKRAGFDHQTSRT). Residues 130–149 (APRQNSSTVSSNVHGNTIVR) show a composition bias toward polar residues. S150 is modified (phosphoserine). A compositionally biased stretch (polar residues) spans 241 to 251 (NTTANKINKTG). Residues 252–270 (ENSKKGKVDGKRAGFDHQT) are compositionally biased toward basic and acidic residues.

As to quaternary structure, forms a heteromer with RSC3. Interacts with NPL6. Component of the two forms of the RSC complex composed of at least either RSC1 or RSC2, and ARP7, ARP9, LDB7, NPL6, RSC3, RSC30, RSC4, RSC58, RSC6, RSC8, RSC9, SFH1, STH1, HTL1 and probably RTT102. The complexes interact with histone and histone variant components of centromeric chromatin. Component of a fungal-specific module (HTL1-LDB7-NPL6-RSC3-RSC30) within the RSC complex.

The protein localises to the nucleus. Component of the chromatin structure-remodeling complex (RSC), which is involved in transcription regulation and nucleosome positioning. RSC is responsible for the transfer of a histone octamer from a nucleosome core particle to naked DNA. The reaction requires ATP and involves an activated RSC-nucleosome intermediate. Remodeling reaction also involves DNA translocation, DNA twist and conformational change. As a reconfigurer of centromeric and flanking nucleosomes, RSC complex is required both for proper kinetochore function in chromosome segregation and, via a PKC1-dependent signaling pathway, for organization of the cellular cytoskeleton. This subunit is required for transcription of ribosomal protein genes and genes involved in the integrity of the cell wall. Together with HTL1, LDB7, NPL6, RSC3 components, defines a fungal-specific module within the RSC complex that plays a role in many cellular functions including the maintenance of cell wall integrity. The protein is Chromatin structure-remodeling complex protein RSC30 (RSC30) of Saccharomyces cerevisiae (strain ATCC 204508 / S288c) (Baker's yeast).